The following is a 462-amino-acid chain: Stabilizer of axonemal microtubules 1 (462 aa).

Mn regions lie at residues 30 to 64 (KPCF…KVNI), 65 to 97 (PMEG…PIQD), 98 to 131 (EMDF…QCND), 132 to 165 (KMEC…PASC), 166 to 199 (RFDH…LCNI), 200 to 232 (PLES…PSEV), 233 to 266 (PFDS…GLDI), 267 to 299 (PFPS…PPEG), 300 to 332 (KMDL…KKSD), 333 to 366 (RFES…FSDE), 367 to 400 (PMEY…RVNI), and 401 to 434 (PLEG…IFDE).

The protein belongs to the FAM154 family. In terms of assembly, associates with microtubules via the Mn regions.

The protein localises to the cytoplasm. The protein resides in the cytoskeleton. It localises to the microtubule organizing center. Its subcellular location is the centrosome. It is found in the centriole. The protein localises to the cilium basal body. The protein resides in the cilium axoneme. In terms of biological role, may play a role in the regulation of cilium length. Stabilizes microtubules at low temperature. The sequence is that of Stabilizer of axonemal microtubules 1 (Saxo1) from Rattus norvegicus (Rat).